Reading from the N-terminus, the 306-residue chain is Curved DNA-binding protein (306 aa).

A J domain is found at 5-69; the sequence is DYYAIMGVKP…QRRAEYDQLW (65 aa).

The protein localises to the cytoplasm. The protein resides in the nucleoid. Its function is as follows. DNA-binding protein that preferentially recognizes a curved DNA sequence. It is probably a functional analog of DnaJ; displays overlapping activities with DnaJ, but functions under different conditions, probably acting as a molecular chaperone in an adaptive response to environmental stresses other than heat shock. Lacks autonomous chaperone activity; binds native substrates and targets them for recognition by DnaK. Its activity is inhibited by the binding of CbpM. This Salmonella choleraesuis (strain SC-B67) protein is Curved DNA-binding protein.